A 126-amino-acid polypeptide reads, in one-letter code: Aspartate 1-decarboxylase (126 aa).

The Schiff-base intermediate with substrate; via pyruvic acid role is filled by Ser-25. Position 25 is a pyruvic acid (Ser) (Ser-25). Residue Thr-57 participates in substrate binding. Tyr-58 acts as the Proton donor in catalysis. Gly-73 to Ala-75 serves as a coordination point for substrate.

The protein belongs to the PanD family. In terms of assembly, heterooctamer of four alpha and four beta subunits. Pyruvate is required as a cofactor. Is synthesized initially as an inactive proenzyme, which is activated by self-cleavage at a specific serine bond to produce a beta-subunit with a hydroxyl group at its C-terminus and an alpha-subunit with a pyruvoyl group at its N-terminus.

The protein resides in the cytoplasm. The catalysed reaction is L-aspartate + H(+) = beta-alanine + CO2. It participates in cofactor biosynthesis; (R)-pantothenate biosynthesis; beta-alanine from L-aspartate: step 1/1. In terms of biological role, catalyzes the pyruvoyl-dependent decarboxylation of aspartate to produce beta-alanine. The polypeptide is Aspartate 1-decarboxylase (Halorhodospira halophila (strain DSM 244 / SL1) (Ectothiorhodospira halophila (strain DSM 244 / SL1))).